The primary structure comprises 228 residues: DNA mismatch repair protein MutH (228 aa).

The protein belongs to the MutH family.

The protein localises to the cytoplasm. Functionally, sequence-specific endonuclease that cleaves unmethylated GATC sequences. It is involved in DNA mismatch repair. The protein is DNA mismatch repair protein MutH of Yersinia pseudotuberculosis serotype O:1b (strain IP 31758).